The chain runs to 58 residues: Proteinase inhibitor PSKP-2 (58 aa).

The Kazal-like domain maps to 1 to 58 (VIEPDCKKYEGKKCPPDIALVCGTNGREYYNECALCVFIRDSTLKADKAIKIKKWGKC). 3 disulfides stabilise this stretch: cysteine 6–cysteine 36, cysteine 14–cysteine 33, and cysteine 22–cysteine 58.

As to expression, skin.

It localises to the secreted. May have a role in mucosal defense against microbes by interacting directly with their membranes. This is Proteinase inhibitor PSKP-2 from Phyllomedusa sauvagei (Sauvage's leaf frog).